The following is a 174-amino-acid chain: Guided entry of tail-anchored proteins factor 1 (174 aa).

Residues 1-8 (MSASETDR) lie on the Lumenal side of the membrane. A helical membrane pass occupies residues 9-29 (WAWLLVLCFVFGCNVLRILLP). Over 30-99 (TLSSFISRVL…VKARTAQLAK (70 aa)) the chain is Cytoplasmic. Residues 39–94 (LQKDAEQESQMRAEIQSMKQELSTVNMMDEFARYARLERKINKMTDKLKTHVKART) adopt a coiled-coil conformation. An interaction with GET3/TRC40 region spans residues 39–97 (LQKDAEQESQMRAEIQSMKQELSTVNMMDEFARYARLERKINKMTDKLKTHVKARTAQL). Residues 100-120 (IKWFISVAFYVLQAALMISLI) form a helical membrane-spanning segment. The Lumenal portion of the chain corresponds to 121-148 (WKYYSVPVAVVPSKWITPLDRLVAFPTR). A helical membrane pass occupies residues 149 to 169 (VAGGIGVTCWILVCNKVVAII). The Cytoplasmic portion of the chain corresponds to 170–174 (LHPFS).

The protein belongs to the WRB/GET1 family. In terms of assembly, component of the Golgi to ER traffic (GET) complex, which is composed of GET1, CAMLG/GET2 and GET3. Within the complex, GET1 and CAMLG form a heterotetramer which is stabilized by phosphatidylinositol binding and which binds to the GET3 homodimer. Interacts with CAMLG/GET2 (via C-terminus). GET3 shows a higher affinity for CAMLG than for GET1.

The protein localises to the endoplasmic reticulum membrane. Functionally, required for the post-translational delivery of tail-anchored (TA) proteins to the endoplasmic reticulum. Together with CAMLG/GET2, acts as a membrane receptor for soluble GET3/TRC40, which recognizes and selectively binds the transmembrane domain of TA proteins in the cytosol. Required to ensure correct topology and ER insertion of CAMLG. This is Guided entry of tail-anchored proteins factor 1 from Rattus norvegicus (Rat).